We begin with the raw amino-acid sequence, 361 residues long: Aminomethyltransferase (361 aa).

The protein belongs to the GcvT family. The glycine cleavage system is composed of four proteins: P, T, L and H.

It carries out the reaction N(6)-[(R)-S(8)-aminomethyldihydrolipoyl]-L-lysyl-[protein] + (6S)-5,6,7,8-tetrahydrofolate = N(6)-[(R)-dihydrolipoyl]-L-lysyl-[protein] + (6R)-5,10-methylene-5,6,7,8-tetrahydrofolate + NH4(+). The glycine cleavage system catalyzes the degradation of glycine. This Phocaeicola vulgatus (strain ATCC 8482 / DSM 1447 / JCM 5826 / CCUG 4940 / NBRC 14291 / NCTC 11154) (Bacteroides vulgatus) protein is Aminomethyltransferase.